We begin with the raw amino-acid sequence, 341 residues long: tRNA N6-adenosine threonylcarbamoyltransferase (341 aa).

Positions 111 and 115 each coordinate Fe cation. Residues 134–138, aspartate 167, glycine 180, and asparagine 276 contribute to the substrate site; that span reads LVSGG. Aspartate 304 serves as a coordination point for Fe cation.

The protein belongs to the KAE1 / TsaD family. The cofactor is Fe(2+).

It is found in the cytoplasm. The catalysed reaction is L-threonylcarbamoyladenylate + adenosine(37) in tRNA = N(6)-L-threonylcarbamoyladenosine(37) in tRNA + AMP + H(+). Required for the formation of a threonylcarbamoyl group on adenosine at position 37 (t(6)A37) in tRNAs that read codons beginning with adenine. Is involved in the transfer of the threonylcarbamoyl moiety of threonylcarbamoyl-AMP (TC-AMP) to the N6 group of A37, together with TsaE and TsaB. TsaD likely plays a direct catalytic role in this reaction. The sequence is that of tRNA N6-adenosine threonylcarbamoyltransferase from Pseudomonas entomophila (strain L48).